The primary structure comprises 221 residues: DNA repair and recombination protein RadB (221 aa).

Belongs to the eukaryotic RecA-like protein family. RadB subfamily.

Its function is as follows. Involved in DNA repair and in homologous recombination. May regulate the cleavage reactions of the branch-structured DNA. Has a very weak ATPase activity that is not stimulated by DNA. Binds DNA but does not promote DNA strands exchange. This Thermococcus gammatolerans (strain DSM 15229 / JCM 11827 / EJ3) protein is DNA repair and recombination protein RadB.